A 70-amino-acid chain; its full sequence is Conotoxin Ep11.12 (70 aa).

A signal peptide spans 1–26; that stretch reads MMFRVTSVGCFLLVILSLNLVVLTNA. 4 cysteine pairs are disulfide-bonded: C27-C41, C34-C46, C40-C50, and C45-C54. The residue at position 57 (P57) is a Proline amide. A propeptide spanning residues 61 to 70 is cleaved from the precursor; the sequence is AKLREFFRQR.

The protein belongs to the conotoxin I2 superfamily. As to expression, expressed by the venom duct.

Its subcellular location is the secreted. This Conus episcopatus (Bishop's cone) protein is Conotoxin Ep11.12.